Here is a 1427-residue protein sequence, read N- to C-terminus: DNA-directed RNA polymerase subunit beta' (1427 aa).

The Zn(2+) site is built by C70, C72, C85, and C88. Residues D461, D463, and D465 each coordinate Mg(2+). 4 residues coordinate Zn(2+): C838, C912, C919, and C922.

The protein belongs to the RNA polymerase beta' chain family. As to quaternary structure, the RNAP catalytic core consists of 2 alpha, 1 beta, 1 beta' and 1 omega subunit. When a sigma factor is associated with the core the holoenzyme is formed, which can initiate transcription. Mg(2+) is required as a cofactor. Zn(2+) serves as cofactor.

It catalyses the reaction RNA(n) + a ribonucleoside 5'-triphosphate = RNA(n+1) + diphosphate. In terms of biological role, DNA-dependent RNA polymerase catalyzes the transcription of DNA into RNA using the four ribonucleoside triphosphates as substrates. This Sorangium cellulosum (strain So ce56) (Polyangium cellulosum (strain So ce56)) protein is DNA-directed RNA polymerase subunit beta'.